The chain runs to 491 residues: Putative ABC transporter ATP-binding protein TDE_0906 (491 aa).

2 ABC transporter domains span residues 2 to 241 (INLN…KQGL) and 267 to 491 (LTLH…KERL). ATP-binding positions include 36–43 (GKSGCGKT) and 300–307 (GKNGCGKT).

The protein belongs to the ABC transporter superfamily.

It is found in the cell inner membrane. Its function is as follows. Probably part of an ABC transporter complex. Responsible for energy coupling to the transport system. The protein is Putative ABC transporter ATP-binding protein TDE_0906 of Treponema denticola (strain ATCC 35405 / DSM 14222 / CIP 103919 / JCM 8153 / KCTC 15104).